The sequence spans 308 residues: Apolipoprotein E (308 aa).

An N-terminal signal peptide occupies residues 1–18 (MKFLWAALVVTLLAGCRA). Repeat copies occupy residues 75-96 (LLIEETMKEVKAYKEELEKQVG), 97-118 (PIAQETQARLSKELQAAQARLE), 119-140 (SDMEDVRTRLAQYRSEAQAALG), 141-162 (QNTDDLQGRLASHLRKLRKRLL), 163-184 (RDAEDLQKRLAVYQAGTREAAE), 185-206 (RGVSAVHERLGPLMMEGPLQAI), 207-224 (PPSQQLRERAEAWGQKVR), and 225-246 (GRLESVGSQARDRLDDMRDQME). The interval 75 to 246 (LLIEETMKEV…RLDDMRDQME (172 aa)) is 8 X 22 AA approximate tandem repeats. Residues 153-163 (HLRKLRKRLLR) form an LDL and other lipoprotein receptors binding region. 157 to 160 (LRKR) contacts heparin. A lipid-binding and lipoprotein association region spans residues 205 to 281 (AIPPSQQLRE…SWFEPLVQDM (77 aa)). 220-227 (GQKVRGRL) contributes to the heparin binding site. Residues 257-308 (SQVRLQAEAFQTRLKSWFEPLVQDMQRQWASLVEKVQSTLGISPSTKPSKTK) are homooligomerization. The interval 269–281 (RLKSWFEPLVQDM) is specificity for association with VLDL.

Belongs to the apolipoprotein A1/A4/E family. In terms of assembly, homotetramer. May interact with ABCA1; functionally associated with ABCA1 in the biogenesis of HDLs. May interact with APP/A4 amyloid-beta peptide; the interaction is extremely stable in vitro but its physiological significance is unclear. May interact with MAPT. May interact with MAP2. In the cerebrospinal fluid, interacts with secreted SORL1. Interacts with PMEL; this allows the loading of PMEL luminal fragment on ILVs to induce fibril nucleation. In terms of processing, APOE exists as multiple glycosylated and sialylated glycoforms within cells and in plasma. The extent of glycosylation and sialylation are tissue and context specific. Post-translationally, glycated in plasma VLDL. Phosphorylated by FAM20C in the extracellular medium.

The protein resides in the secreted. The protein localises to the extracellular space. Its subcellular location is the extracellular matrix. It localises to the extracellular vesicle. It is found in the endosome. The protein resides in the multivesicular body. Functionally, APOE is an apolipoprotein, a protein associating with lipid particles, that mainly functions in lipoprotein-mediated lipid transport between organs via the plasma and interstitial fluids. APOE is a core component of plasma lipoproteins and is involved in their production, conversion and clearance. Apolipoproteins are amphipathic molecules that interact both with lipids of the lipoprotein particle core and the aqueous environment of the plasma. As such, APOE associates with chylomicrons, chylomicron remnants, very low density lipoproteins (VLDL) and intermediate density lipoproteins (IDL) but shows a preferential binding to high-density lipoproteins (HDL). It also binds a wide range of cellular receptors including the LDL receptor/LDLR and the very low-density lipoprotein receptor/VLDLR that mediate the cellular uptake of the APOE-containing lipoprotein particles. Finally, APOE also has a heparin-binding activity and binds heparan-sulfate proteoglycans on the surface of cells, a property that supports the capture and the receptor-mediated uptake of APOE-containing lipoproteins by cells. The chain is Apolipoprotein E (APOE) from Pteropus vampyrus (Large flying fox).